Here is a 267-residue protein sequence, read N- to C-terminus: Myxobacterial hemagglutinin (267 aa).

A run of 4 repeats spans residues 1–66 (MAAY…GTLS), 67–133 (SANN…SEVT), 134–200 (DGDT…GTLT), and 201–267 (SPDT…ARLG). The segment at 1-267 (MAAYLVQNQW…GPIGFRARLG (267 aa)) is 4 X 65 AA tandem repeats.

It belongs to the bacterial lectin family.

In terms of biological role, this lectin might have a role in the differentiation of cells. This chain is Myxobacterial hemagglutinin (mbhA), found in Myxococcus xanthus.